Here is a 388-residue protein sequence, read N- to C-terminus: Cystathionine gamma-synthase (388 aa).

The tract at residues 1–24 is disordered; sequence MSEDRTGHQGISGPATRAIHAGYR. Lysine 208 bears the N6-(pyridoxal phosphate)lysine mark.

The protein belongs to the trans-sulfuration enzymes family. As to quaternary structure, homotetramer. Pyridoxal 5'-phosphate serves as cofactor.

The protein localises to the cytoplasm. It catalyses the reaction O-succinyl-L-homoserine + L-cysteine = L,L-cystathionine + succinate + H(+). Functionally, catalyzes the formation of L-cystathionine from O-succinyl-L-homoserine (OSHS) and L-cysteine, via a gamma-replacement reaction. In the absence of thiol, catalyzes gamma-elimination to form 2-oxobutanoate, succinate and ammonia. The sequence is that of Cystathionine gamma-synthase (metB) from Mycobacterium bovis (strain ATCC BAA-935 / AF2122/97).